Reading from the N-terminus, the 287-residue chain is Lectin 10 (287 aa).

Topologically, residues 1–11 (MALSNLKSNRT) are cytoplasmic. Residues 12-31 (LSSSLITIFIISLFLQYHNI) form a helical membrane-spanning segment. Over 32–287 (KSQSSWQSRQ…IINWSFESAL (256 aa)) the chain is Extracellular. N-linked (GlcNAc...) asparagine glycosylation is found at asparagine 124, asparagine 147, asparagine 243, and asparagine 280.

Belongs to the leguminous lectin family.

It is found in the membrane. In terms of biological role, may be involved in arbuscular mycorrhizal (AM) symbiosis with AM fungi. In Medicago truncatula (Barrel medic), this protein is Lectin 10.